We begin with the raw amino-acid sequence, 315 residues long: MMASLRHSITSALRSSRQGCSKSAQWQSLDQQFGALRISSRSLSTHAHDHNPNVDGQFIAAPALSIDNFKLHPYARAVPVSPSYFTRTPRFYDNYLSLEKLMEEYEDLPVIPATAVERVAWKTLEDIRKELGEQVKASEFARCLALVKRLNSIHPDLKPQEIKDVLDSFRRNVQPFTNVAKPIPIDQFGRACGVGKRKASSARAFVVEGTGEVLVNGKTLAEYFGRVHDRESAVWALRATNRIDKYNVWVKVEGGGTTGQAEAITLAIAKALLAHEPALKPALRRAGCVTRDPRKVERKKHGHVKARKMPTWVKR.

A mitochondrion-targeting transit peptide spans 1–42; sequence MMASLRHSITSALRSSRQGCSKSAQWQSLDQQFGALRISSRS. The interval 293-315 is disordered; it reads PRKVERKKHGHVKARKMPTWVKR. Residues 296–315 are compositionally biased toward basic residues; it reads VERKKHGHVKARKMPTWVKR.

This sequence belongs to the universal ribosomal protein uS9 family. In terms of assembly, component of the mitochondrial small ribosomal subunit (mt-SSU). Mature N.crassa 74S mitochondrial ribosomes consist of a small (37S) and a large (54S) subunit. The 37S small subunit contains a 16S ribosomal RNA (16S mt-rRNA) and 32 different proteins. The 54S large subunit contains a 23S rRNA (23S mt-rRNA) and 42 different proteins.

The protein localises to the mitochondrion. Its function is as follows. Component of the mitochondrial ribosome (mitoribosome), a dedicated translation machinery responsible for the synthesis of mitochondrial genome-encoded proteins, including at least some of the essential transmembrane subunits of the mitochondrial respiratory chain. The mitoribosomes are attached to the mitochondrial inner membrane and translation products are cotranslationally integrated into the membrane. This is Small ribosomal subunit protein uS9m (mrp-9) from Neurospora crassa (strain ATCC 24698 / 74-OR23-1A / CBS 708.71 / DSM 1257 / FGSC 987).